The chain runs to 244 residues: B3 domain-containing protein At2g36080 (244 aa).

The segment at residues 38 to 144 (FEKPLTPSDV…RFFIGWRRRG (107 aa)) is a DNA-binding region (TF-B3).

Its subcellular location is the nucleus. This Arabidopsis thaliana (Mouse-ear cress) protein is B3 domain-containing protein At2g36080 (ARF31).